A 460-amino-acid polypeptide reads, in one-letter code: Probable glucan endo-1,3-beta-glucosidase eglC (460 aa).

A signal peptide spans 1 to 18; sequence MQLAQLAAFAMTLATSEA. Glu-128 acts as the Proton donor in catalysis. The N-linked (GlcNAc...) asparagine glycan is linked to Asn-183. Catalysis depends on Glu-239, which acts as the Nucleophile. Asn-312, Asn-367, and Asn-373 each carry an N-linked (GlcNAc...) asparagine glycan. A disordered region spans residues 379–437; that stretch reads RPSGSASARPSAGAISSGSGSSSSGSGSSGSTGTSATSGQSSSSGSSAAAGSSSPAAFS. Residues 380–437 show a composition bias toward low complexity; that stretch reads PSGSASARPSAGAISSGSGSSSSGSGSSGSTGTSATSGQSSSSGSSAAAGSSSPAAFS. Residue Ser-430 is the site of GPI-anchor amidated serine attachment. Residues 431 to 460 constitute a propeptide, removed in mature form; sequence SSPAAFSGASTLSGSLFGAVVAVFMTLAAL.

Belongs to the glycosyl hydrolase 17 family. Post-translationally, the GPI-anchor is attached to the protein in the endoplasmic reticulum and serves to target the protein to the cell surface. There, the glucosamine-inositol phospholipid moiety is cleaved off and the GPI-modified mannoprotein is covalently attached via its lipidless GPI glycan remnant to the 1,6-beta-glucan of the outer cell wall layer.

The protein resides in the cell membrane. Its subcellular location is the secreted. The protein localises to the cell wall. It carries out the reaction Hydrolysis of (1-&gt;3)-beta-D-glucosidic linkages in (1-&gt;3)-beta-D-glucans.. Its function is as follows. Glucanases play a role in cell expansion during growth, in cell-cell fusion during mating, and in spore release during sporulation. This enzyme may be involved in beta-glucan degradation and also function biosynthetically as a transglycosylase. This is Probable glucan endo-1,3-beta-glucosidase eglC (eglC) from Aspergillus niger (strain ATCC MYA-4892 / CBS 513.88 / FGSC A1513).